Here is a 700-residue protein sequence, read N- to C-terminus: DNA ligase (700 aa).

NAD(+) contacts are provided by residues 61–65, 110–111, and Glu-141; these read DAEYD and SL. Lys-143 acts as the N6-AMP-lysine intermediate in catalysis. Positions 164, 202, 321, and 345 each coordinate NAD(+). The Zn(2+) site is built by Cys-439, Cys-442, Cys-457, and Cys-462. Positions 619–700 constitute a BRCT domain; it reads AVSNKLAGLQ…EFLRLLEDSK (82 aa).

It belongs to the NAD-dependent DNA ligase family. LigA subfamily. The cofactor is Mg(2+). Mn(2+) serves as cofactor.

It carries out the reaction NAD(+) + (deoxyribonucleotide)n-3'-hydroxyl + 5'-phospho-(deoxyribonucleotide)m = (deoxyribonucleotide)n+m + AMP + beta-nicotinamide D-nucleotide.. In terms of biological role, DNA ligase that catalyzes the formation of phosphodiester linkages between 5'-phosphoryl and 3'-hydroxyl groups in double-stranded DNA using NAD as a coenzyme and as the energy source for the reaction. It is essential for DNA replication and repair of damaged DNA. The sequence is that of DNA ligase from Hydrogenobaculum sp. (strain Y04AAS1).